The primary structure comprises 104 residues: Phosphoribosyl-ATP pyrophosphatase (104 aa).

Belongs to the PRA-PH family.

It localises to the cytoplasm. The enzyme catalyses 1-(5-phospho-beta-D-ribosyl)-ATP + H2O = 1-(5-phospho-beta-D-ribosyl)-5'-AMP + diphosphate + H(+). It functions in the pathway amino-acid biosynthesis; L-histidine biosynthesis; L-histidine from 5-phospho-alpha-D-ribose 1-diphosphate: step 2/9. The polypeptide is Phosphoribosyl-ATP pyrophosphatase (Erythrobacter litoralis (strain HTCC2594)).